Reading from the N-terminus, the 1907-residue chain is Probable RNA-directed RNA polymerase (1907 aa).

A disordered region spans residues 42-61; the sequence is NTHNDHEETHGESPEVPKAS. Positions 44–56 are enriched in basic and acidic residues; the sequence is HNDHEETHGESPE.

It belongs to the totiviridae RNA-directed RNA polymerase family.

The enzyme catalyses RNA(n) + a ribonucleoside 5'-triphosphate = RNA(n+1) + diphosphate. RNA-dependent RNA polymerase which replicates the viral genome. Catalyzes the transcription of fully conservative plus-strand genomic RNAs that are extruded from the virion into the cytoplasm where they function as mRNAs for translation of viral proteins and also as substrates for encapsidation to form new virions. Once encapsidated, the positive strand is converted to dsRNA by the RNA-directed RNA polymerase. Displays ssRNA-binding activity. This chain is Probable RNA-directed RNA polymerase (gag-pol), found in Giardia intestinalis (Giardia lamblia).